The primary structure comprises 141 residues: Large ribosomal subunit protein uL11 (141 aa).

This sequence belongs to the universal ribosomal protein uL11 family. In terms of assembly, part of the ribosomal stalk of the 50S ribosomal subunit. Interacts with L10 and the large rRNA to form the base of the stalk. L10 forms an elongated spine to which L12 dimers bind in a sequential fashion forming a multimeric L10(L12)X complex. In terms of processing, one or more lysine residues are methylated.

Its function is as follows. Forms part of the ribosomal stalk which helps the ribosome interact with GTP-bound translation factors. In Fusobacterium nucleatum subsp. nucleatum (strain ATCC 25586 / DSM 15643 / BCRC 10681 / CIP 101130 / JCM 8532 / KCTC 2640 / LMG 13131 / VPI 4355), this protein is Large ribosomal subunit protein uL11.